The sequence spans 210 residues: Large ribosomal subunit protein uL3 (210 aa).

The disordered stretch occupies residues 122-155; that stretch reads NQKRNNFGRGPMSHGSKNHRAPGSIGAGTTPGRV.

It belongs to the universal ribosomal protein uL3 family. As to quaternary structure, part of the 50S ribosomal subunit. Forms a cluster with proteins L14 and L19.

In terms of biological role, one of the primary rRNA binding proteins, it binds directly near the 3'-end of the 23S rRNA, where it nucleates assembly of the 50S subunit. In Nostoc punctiforme (strain ATCC 29133 / PCC 73102), this protein is Large ribosomal subunit protein uL3.